The primary structure comprises 712 residues: MENLIPVVNKLQDVFATLGRKEDQIQLPQIVVVGSQSAGKSSVLENLVGRDFLPRGTGIVTRRPLILQLNHVALDDESKRRRSNGTLLTDDWAMFEHTGSKVFTDFDAVRKEIEDETDRVTGVNKGISLLPISLKIYSHRVVSLSLVDLPGITKIPVGDQPVNIEEQIREMILLYISNPSSIILAVTPANQDFATSEPIKLAREVDAGGQRTLAVLTKLDLMDQGTDAMDVLMGKVIPVKLGIIGVVNRSQQNILDNKLIVDAVKDEQSFMQKKYPTLASRNGTPYLAKRLNMLLMHHIRNCLPALKARVSIMNAQCQSDLVAFGEPVEDKNRTLLQIITRFATAYTSTIEGTARNIETTELCGGARICYIFHDTFGRSLESVNPLENLTQLDILTAIRNATGPRPALFVPEVSFELLVKRQIQRLEEPSLRCVELVHEEMQRMVQHCGFTTQQEMIRFPRLYDKINEVVSGVLKERLKPTNELVENLVAIELAYINTKHPEFTEANLVTLLKEELLLDDRHGRSRNRHASTGERAVSAHGEQQLQPVPGVNGVDLNAVLQQQQQQSQNQRASNGFLGLFGNAAASSKTSPQEKQSANFLPEVPETQLGRKLTSREQRDVAIIERLIRNYFIIVRKNIQDSVPKAIMALLVNFVRDNLQSELVRQLYKPDEMDDLLAETEDMAQRRRDTLETMKALQQASVIISEVRETQVW.

Positions 24 to 304 constitute a Dynamin-type G domain; it reads QIQLPQIVVV…LMHHIRNCLP (281 aa). The tract at residues 34–41 is G1 motif; that stretch reads GSQSAGKS. Residues 60–62 form a G2 motif region; that stretch reads VTR. The G3 motif stretch occupies residues 148–151; that stretch reads DLPG. A G4 motif region spans residues 217-220; it reads TKLD. The tract at residues 247–250 is G5 motif; sequence VNRS. An interaction with caspase ced-9 region spans residues 280 to 502; it reads SRNGTPYLAK…LAYINTKHPE (223 aa). Positions 523 to 542 are disordered; that stretch reads GRSRNRHASTGERAVSAHGE. Residues 620 to 711 enclose the GED domain; it reads VAIIERLIRN…IISEVRETQV (92 aa).

It belongs to the TRAFAC class dynamin-like GTPase superfamily. Dynamin/Fzo/YdjA family. In terms of assembly, interacts (via residues 280-502) with caspase ced-9; the interaction is enhanced by GTP rather than GDP; the interaction is probably direct and may occur at the mitochondrion. Highly expressed in neurons, in intestinal cells and in the body wall, pharyngeal, and vulval muscles.

It localises to the mitochondrion. It is found in the mitochondrion outer membrane. The protein resides in the cytoplasm. Its subcellular location is the cytosol. It carries out the reaction GTP + H2O = GDP + phosphate + H(+). Its activity is regulated as follows. GTPase activity is increased by binding to phospholipid membranes. Its function is as follows. Functions in mitochondrial division. Functions in peroxisomal division. Mediates membrane fission, perhaps mainly of the mitochondrial outer membrane. Mitochondrial fission may be promoted by recruitment to mitochondrial membranes via the egl-1/ced-9 complex. Involved in the coordination of mitochondrial division with autophagy in response to acute heat stress during larval development. Plays a role in apoptosis by promoting mitochondrial elimination and cell-death execution, acting downstream of caspase ced-3, and perhaps independently of FIS1-related protein fis-2, caspase ced-9 and apoptosis-inducing factor AIFM/wah-1. Role in promoting apoptosis dependent upon cleavage of drp-1 by ced-3. Involved in negatively modulating longevity in concert with the Insulin/IGF-1-like signaling (IIS) mediated pathway. The polypeptide is Dynamin-1-like protein drp-1 (Caenorhabditis elegans).